Reading from the N-terminus, the 140-residue chain is UPF0134 protein MPN_094 (140 aa).

Belongs to the UPF0134 family.

The sequence is that of UPF0134 protein MPN_094 from Mycoplasma pneumoniae (strain ATCC 29342 / M129 / Subtype 1) (Mycoplasmoides pneumoniae).